We begin with the raw amino-acid sequence, 411 residues long: Lissencephaly-1 homolog (411 aa).

In terms of domain architecture, LisH spans 9–41 (QREELNQAIADYLGSNGYADSLEAFRKEADLST). A coiled-coil region spans residues 56-83 (TSVIRLQKKVMELEAKLTEAEKEVIEGA). WD repeat units lie at residues 106–147 (GHRA…RSLK), 148–187 (GHTD…ECVK), 191–230 (GHDH…CVKT), 233–272 (GHRE…CKVE), 275–334 (DHEH…CLFT), 337–376 (GHDN…CMKT), and 379–411 (AHQH…WECR).

Belongs to the WD repeat LIS1/nudF family.

It is found in the cytoplasm. The protein resides in the cytoskeleton. The protein localises to the microtubule organizing center. It localises to the centrosome. In terms of biological role, positively regulates the activity of the minus-end directed microtubule motor protein dynein. May enhance dynein-mediated microtubule sliding by targeting dynein to the microtubule plus end. Required for several dynein- and microtubule-dependent processes. This is Lissencephaly-1 homolog from Drosophila ananassae (Fruit fly).